The primary structure comprises 136 residues: Flagellar basal-body rod protein FlgC (136 aa).

The protein belongs to the flagella basal body rod proteins family. As to quaternary structure, the basal body constitutes a major portion of the flagellar organelle and consists of four rings (L,P,S, and M) mounted on a central rod. The rod consists of about 26 subunits of FlgG in the distal portion, and FlgB, FlgC and FlgF are thought to build up the proximal portion of the rod with about 6 subunits each.

It is found in the bacterial flagellum basal body. The chain is Flagellar basal-body rod protein FlgC (flgC) from Buchnera aphidicola subsp. Baizongia pistaciae (strain Bp).